A 119-amino-acid chain; its full sequence is Beta-2-microglobulin (119 aa).

A signal peptide spans Met-1–Ala-20. The Ig-like C1-type domain maps to Pro-25 to Lys-114. Cys-45 and Cys-100 are joined by a disulfide.

Belongs to the beta-2-microglobulin family. Heterodimer of an alpha chain and a beta chain. Beta-2-microglobulin is the beta-chain of major histocompatibility complex class I molecules.

Its subcellular location is the secreted. Component of the class I major histocompatibility complex (MHC). Involved in the presentation of peptide antigens to the immune system. The sequence is that of Beta-2-microglobulin (B2M) from Macaca fascicularis (Crab-eating macaque).